A 299-amino-acid chain; its full sequence is GTPase Era (299 aa).

An Era-type G domain is found at 2–170; sequence KTGFVALAGK…LDLIIENLPE (169 aa). Positions 10 to 17 are G1; sequence GKPNVGKS. 10 to 17 provides a ligand contact to GTP; it reads GKPNVGKS. Residues 36-40 are G2; it reads QTTRN. A G3 region spans residues 57–60; that stretch reads DTPG. Residues 57-61 and 119-122 contribute to the GTP site; these read DTPGI and NKID. Residues 119–122 form a G4 region; sequence NKID. Residues 149 to 151 are G5; sequence TSA. The region spanning 201–278 is the KH type-2 domain; sequence TYEEIPHSVA…FLDLHVKVKR (78 aa).

The protein belongs to the TRAFAC class TrmE-Era-EngA-EngB-Septin-like GTPase superfamily. Era GTPase family. As to quaternary structure, monomer.

It localises to the cytoplasm. The protein resides in the cell inner membrane. In terms of biological role, an essential GTPase that binds both GDP and GTP, with rapid nucleotide exchange. Plays a role in 16S rRNA processing and 30S ribosomal subunit biogenesis and possibly also in cell cycle regulation and energy metabolism. The polypeptide is GTPase Era (Thermosipho melanesiensis (strain DSM 12029 / CIP 104789 / BI429)).